Here is an 824-residue protein sequence, read N- to C-terminus: Mucosa-associated lymphoid tissue lymphoma translocation protein 1 (824 aa).

A disordered region spans residues 1–27 (MSLLGDPLQALPPSAAPTGPLLAPPAG). An N-acetylserine modification is found at S2. The span at 11–27 (LPPSAAPTGPLLAPPAG) shows a compositional bias: low complexity. In terms of domain architecture, Death spans 39-126 (RRLSELLDQA…EVLQLLSPPG (88 aa)). Ig-like C2-type domains follow at residues 125–201 (PGIK…FEFS) and 212–305 (PESF…KKVE). S135 is subject to Phosphoserine. Intrachain disulfides connect C147–C190 and C248–C290. The interval 348–562 (IGNMNYREHP…SLSEKRALTD (215 aa)) is caspase-like. The Nuclear export signal motif lies at 369-376 (LTNLLRQL). Residues H415 and C464 contribute to the active site.

This sequence belongs to the peptidase C14B family. As to quaternary structure, homooligomer; forms oligomers which bind to TRAF6. Forms a complex with CARD14 and MALT1; resulting in the formation of a CBM (CARD14-BCL10-MALT1) complex. Forms a complex with CARD11 and MALT1; resulting in the formation of a CBM (CARD11-BCL10-MALT1) complex. Forms a complex with CARD9 and MALT1; resulting in the formation of a CBM (CARD9-BCL10-MALT1) complex. In terms of tissue distribution, highly expressed in peripheral blood mononuclear cells. Detected at lower levels in bone marrow, thymus and lymph node, and at very low levels in colon and lung.

It localises to the cytoplasm. It is found in the perinuclear region. The protein resides in the nucleus. Protease that enhances BCL10-induced activation: acts via formation of CBM complexes that channel adaptive and innate immune signaling downstream of CARD domain-containing proteins (CARD9, CARD11 and CARD14) to activate NF-kappa-B and MAP kinase p38 pathways which stimulate expression of genes encoding pro-inflammatory cytokines and chemokines. Mediates BCL10 cleavage: MALT1-dependent BCL10 cleavage plays an important role in T-cell antigen receptor-induced integrin adhesion. Involved in the induction of T helper 17 cells (Th17) differentiation. Cleaves RC3H1 and ZC3H12A in response to T-cell receptor (TCR) stimulation which releases their cooperatively repressed targets to promote Th17 cell differentiation. Also mediates cleavage of N4BP1 in T-cells following TCR-mediated activation, leading to N4BP1 inactivation. May also have ubiquitin ligase activity: binds to TRAF6, inducing TRAF6 oligomerization and activation of its ligase activity. The polypeptide is Mucosa-associated lymphoid tissue lymphoma translocation protein 1 (Homo sapiens (Human)).